The sequence spans 301 residues: MSSVDQIVKTFANLPEGERNAAVNAILAMMPPGPGPVRQIPEPVPQAPAPKKKVNGFMGFRSYYSSLFSQFPQKARSPFMTILWQHDPFHNEWDFMCSVYSSIRNYLEQLNAQREKKITLQYWLHFAVPVMGVLGRENYLPTLGWDLVTMPNGTIDLMRIAMPLFRKNLQPMDGLCLFTKCQEGGLQVDNQHFVIAKLSDPSHDMIWFNKRPHYQQRHAAQTDSSEAGVSALFPRNHAVAAEADGVATVQLPHWMQQGDFGTESGYSPQFETLLGSILENGNATSNDSYNMALAMDVPMMG.

Positions 49–104 form a DNA-binding region, alpha box; sequence APKKKVNGFMGFRSYYSSLFSQFPQKARSPFMTILWQHDPFHNEWDFMCSVYSSIR.

The protein belongs to the MATALPHA1 family.

The protein resides in the nucleus. Mating type proteins are sequence specific DNA-binding proteins that act as master switches in fungal differentiation by controlling gene expression in a cell type-specific fashion. Transcriptional activator that induces the transcription of alpha-specific genes. The chain is Mating type protein mtA-1 (MTA1) from Sordaria fimicola.